Here is a 334-residue protein sequence, read N- to C-terminus: Putative fatty acid elongase 1 (334 aa).

Over 1-51 (MDLTGAHMLKIHRPSIDHPFGVDLWHLFEQLSIKTIGWNPSEFEYIPGKTP) the chain is Lumenal. A helical transmembrane segment spans residues 52-72 (MSQWSSVIVSITAYYVIILSG). The Cytoplasmic segment spans residues 73-86 (RAIMTNRKPLKQRR). The chain crosses the membrane as a helical span at residues 87–107 (LFQLHNFILTIISGALLALLV). Over 108–135 (EEVFRNYMRNGLFYCVCDSRHFTQRLVT) the chain is Lumenal. Residues 136 to 156 (LYYLNYLTKYLELMDTVFLFL) traverse the membrane as a helical segment. Topologically, residues 157–160 (KKKP) are cytoplasmic. The helical transmembrane segment at 161–181 (LAFLHCYHHGITALLCFTQLL) threads the bilayer. Residues 182–187 (GRTSVQ) are Lumenal-facing. Residues 188-208 (WGVIGLNLYVHVIMYSYYFLA) form a helical membrane-spanning segment. The Cytoplasmic portion of the chain corresponds to 209–224 (ACGRRVWWKQWVTRVQ). The chain crosses the membrane as a helical span at residues 225–245 (IIQFVLDLILCYFGTYSHIAF). Topologically, residues 246–260 (RYFPWLPHVGDCSGS) are lumenal. Residues 261 to 281 (LFAAFFGCGVLSSYLFLFIGF) traverse the membrane as a helical segment. At 282 to 334 (YINTYIKRGAKKNQRKAAGKADNTSVAAAAGSEALAATTATNASPFSARSRKL) the chain is on the cytoplasmic side. The residue at position 325 (S325) is a Phosphoserine.

The protein belongs to the ELO family.

Its subcellular location is the endoplasmic reticulum membrane. It catalyses the reaction a very-long-chain acyl-CoA + malonyl-CoA + H(+) = a very-long-chain 3-oxoacyl-CoA + CO2 + CoA. Its function is as follows. May be involved in the synthesis of very long chain fatty acids. In Schizosaccharomyces pombe (strain 972 / ATCC 24843) (Fission yeast), this protein is Putative fatty acid elongase 1.